Here is a 284-residue protein sequence, read N- to C-terminus: Tropomyosin (284 aa).

Residues 1–284 (MDGIKKKMIA…DQTFAELTGY (284 aa)) adopt a coiled-coil conformation. A disordered region spans residues 111 to 131 (TKLEEASKTAEESERGRKDLE).

It belongs to the tropomyosin family. In terms of assembly, homodimer.

Its function is as follows. Tropomyosin, in association with the troponin complex, plays a central role in the calcium dependent regulation of muscle contraction. This chain is Tropomyosin, found in Schistosoma haematobium (Blood fluke).